The chain runs to 508 residues: Probable glycine dehydrogenase (decarboxylating) subunit 2 (508 aa).

Residue Lys-277 is modified to N6-(pyridoxal phosphate)lysine.

This sequence belongs to the GcvP family. C-terminal subunit subfamily. The glycine cleavage system is composed of four proteins: P, T, L and H. In this organism, the P 'protein' is a heterodimer of two subunits. Requires pyridoxal 5'-phosphate as cofactor.

It carries out the reaction N(6)-[(R)-lipoyl]-L-lysyl-[glycine-cleavage complex H protein] + glycine + H(+) = N(6)-[(R)-S(8)-aminomethyldihydrolipoyl]-L-lysyl-[glycine-cleavage complex H protein] + CO2. In terms of biological role, the glycine cleavage system catalyzes the degradation of glycine. The P protein binds the alpha-amino group of glycine through its pyridoxal phosphate cofactor; CO(2) is released and the remaining methylamine moiety is then transferred to the lipoamide cofactor of the H protein. The chain is Probable glycine dehydrogenase (decarboxylating) subunit 2 from Saccharolobus solfataricus (strain ATCC 35092 / DSM 1617 / JCM 11322 / P2) (Sulfolobus solfataricus).